Here is a 320-residue protein sequence, read N- to C-terminus: Dipeptide transport system permease protein DppC (320 aa).

The next 6 membrane-spanning stretches (helical) occupy residues 56–76 (LAMA…IGPF), 121–141 (LFVG…YGGV), 154–176 (MRII…MVLM), 230–252 (LLPN…AIFA), 267–287 (FASW…GHWW), and 289–309 (LFFP…LGDG). One can recognise an ABC transmembrane type-1 domain in the interval 117–307 (ARISLFVGVM…LTMYAFNVLG (191 aa)).

This sequence belongs to the binding-protein-dependent transport system permease family. OppBC subfamily.

It is found in the cell membrane. In terms of biological role, probably part of the ABC transporter DppBCDE involved in dipeptide transport. Responsible for the translocation of the substrate across the membrane. The chain is Dipeptide transport system permease protein DppC (dppC) from Bacillus subtilis (strain 168).